Here is a 293-residue protein sequence, read N- to C-terminus: FAS1 domain-containing protein DEHA2G15708g (293 aa).

A signal peptide spans Met1–Ser18. Residues Asp76–Lys87 show a composition bias toward basic and acidic residues. Residues Asp76–Arg126 are disordered. Residues Gln141–Leu290 enclose the FAS1 domain.

It is found in the vacuole. This Debaryomyces hansenii (strain ATCC 36239 / CBS 767 / BCRC 21394 / JCM 1990 / NBRC 0083 / IGC 2968) (Yeast) protein is FAS1 domain-containing protein DEHA2G15708g.